The chain runs to 523 residues: MPSEYVPEATTVLVIGGGPAGSYASTLLAREGIDVVLLEAVKHPREHVGESMLPSMRHYLRFIDLESEYDARKFMHKPGAAFKFVHGQRECYTDFKILGPDRTTWNVFRAEADELMLRHAASQGVKIFEETRVESITFSESVDNSVSPESRPIAASWKNKSGQVGKISFNWLIDASGRQGIMSTKYMKNRIYREGLRNVAAYGYWKDVTVFEEGGPRSNAPWFECLTDREGWAWLIPLHNGTTSIGVVMHQDTSNRKKAEGPSGLEQHYLSQLKLAPGVQDLIGSKGSYVPGSVKSTADYSYHATEYSGDHYRIIGDAAAFVDPLFSSGVHVAMTGALSAASTILGSMKGQVTEVEAQAWHDAKIGICQTRFLLVVLSAYRQMQHVGNKALLDDVNASNFDAAFSLFRPIYQGEHDTSTSLTNEELSKMIEFTRNLFTPTTHQQYNEVKQRVGDLIALSGPVMPSDELDKVLDSDDSDAKAVLKRINSLKVLRNDTSPESFTSEAVNGYVVNLERGQLGLVRA.

Residues G17, A20, and E50 each coordinate FAD. The chloride site is built by S328 and G329. FAD is bound at residue V330.

Belongs to the flavin-dependent halogenase family.

It carries out the reaction melleolide F + FADH2 + chloride + O2 = 6'-chloromelleolide F + FAD + 2 H2O + H(+). Functionally, flavin-dependent halogenase involved in the biosynthesis of melleolides, a range of antifungal and phytotoxic polyketide derivatives composed of an orsellinic acid (OA) moiety esterified to various sesquiterpene alcohols. The halogenase catalyzes the transfer of a single chlorine atom to the melleolide backbone, resulting in a 6'-chloromelleolide product. The enzyme acts on free substrate and does not depend on carrier-protein-dependent acceptor molecules. This is Flavin-dependent halogenase armH5 from Armillaria mellea (Honey mushroom).